The primary structure comprises 604 residues: MNKTKGFTKYKKMRYMPGLDGLRAIAVLGIIIYHLNKQWLTGGFLGVDTFFVISGYLITSLLLKEYDDTGIIKLKSFWIRRLKRLLPAVIVLLMVVGTATLLLKSDNIIRVKHDIIAAIFYVSNWWYIAKDVNYFEQFSFMPLKHLWSLAIEEQFYIFFPVILVTLLLTIKKRYKIGFIFWGVSIISLGLMMFIYSINGDHSRVYFGTDTRLQTLLLGVILAFLWPPFKLKNDPPKVVKYVIDSIGSLSFIVLILLFFIINDETNWIYDGGFYLISILTLFIIASVVHPSTWIAKIFSNPVLVFIGKRSYSLYLWHFAVISFVHSYYVDGQIPVYVYFIDISLTIIFAELSYRFIETPFRKEGIKALNWRPSYIPQFIRMAIVVTLLIPFMLILVGAFNKYGKDIIGEKANSFDTTIEDNYLMRIAPIDNIHIDGLVSEKKKESSDVYNNIKPLLIGDSVMVDIGESFKSSVPKSRIDGKVGRQLYQTLPLVKANYSQYKKSSDQVVLELGTNGDFTVKQLDDLLNQFGKAKIYLVNTRVPRIYEANVNRLLADAAKRKSNVTLIDWNKRSQGHSEYFAPDGVHLEYKGVLALKDEILKALKKK.

The next 11 helical transmembrane spans lie at 15–35, 43–63, 85–105, 150–170, 176–196, 212–232, 240–260, 267–287, 310–330, 332–352, and 377–397; these read YMPGLDGLRAIAVLGIIIYHL, GFLGVDTFFVISGYLITSLLL, LLPAVIVLLMVVGTATLLLKS, AIEEQFYIFFPVILVTLLLTI, IGFIFWGVSIISLGLMMFIYS, LQTLLLGVILAFLWPPFKLKN, YVIDSIGSLSFIVLILLFFII, IYDGGFYLISILTLFIIASVV, YSLYLWHFAVISFVHSYYVDG, IPVYVYFIDISLTIIFAELSY, and FIRMAIVVTLLIPFMLILVGA. Residues Ser459, Asp581, and His584 contribute to the active site.

The protein belongs to the acyltransferase 3 family.

The protein resides in the cell membrane. This is Putative O-acetyltransferase SAV0974 from Staphylococcus aureus (strain Mu50 / ATCC 700699).